The following is a 326-amino-acid chain: D-alanine--D-alanine ligase (326 aa).

An ATP-grasp domain is found at 112-312; that stretch reads KRIWRFEGLP…YENLCLGILA (201 aa). 138–193 serves as a coordination point for ATP; it reads LQALGAPMIVKPSREGSTIGLTKVWTAEECDQAYVLASRYDPEVLCEEFIEGDETT. The Mg(2+) site is built by D265, E279, and N281.

This sequence belongs to the D-alanine--D-alanine ligase family. Requires Mg(2+) as cofactor. The cofactor is Mn(2+).

The protein resides in the cytoplasm. The catalysed reaction is 2 D-alanine + ATP = D-alanyl-D-alanine + ADP + phosphate + H(+). It functions in the pathway cell wall biogenesis; peptidoglycan biosynthesis. In terms of biological role, cell wall formation. The polypeptide is D-alanine--D-alanine ligase (Delftia acidovorans (strain DSM 14801 / SPH-1)).